We begin with the raw amino-acid sequence, 2451 residues long: Reducing polyketide synthase 8 (2451 aa).

One can recognise a Ketosynthase family 3 (KS3) domain in the interval 12 to 434; it reads NEPIAIVGSS…GTNAHAILEA (423 aa). Active-site for beta-ketoacyl synthase activity residues include cysteine 174, histidine 313, and histidine 354. The region spanning 538-846 is the Malonyl-CoA:ACP transacylase (MAT) domain; it reads VFTGQGAQWA…GPATETINNM (309 aa). Residues 940–1085 form an N-terminal hotdog fold region; it reads HQLLGSASTF…GFLRIELGAP (146 aa). One can recognise a PKS/mFAS DH domain in the interval 940-1254; it reads HQLLGSASTF…LLNLPGSLRS (315 aa). The active-site Proton acceptor; for dehydratase activity is the histidine 974. Residues 1100-1254 are C-terminal hotdog fold; it reads LIPLDVEELY…LLNLPGSLRS (155 aa). The active-site Proton donor; for dehydratase activity is the aspartate 1160. The methyltransfrase (MT) domain stretch occupies residues 1294–1590; sequence LVLFYCQKVL…QHFCSVMLSQ (297 aa). The region spanning 2088–2266 is the Ketoreductase (KR) domain; that stretch reads TYLLLGLAGD…PGCVVHIGGV (179 aa). The Carrier domain maps to 2366–2451; that stretch reads DACLDLLLGG…LAIWRKQVKA (86 aa). Residue serine 2404 is modified to O-(pantetheine 4'-phosphoryl)serine.

It depends on pantetheine 4'-phosphate as a cofactor.

Its pathway is secondary metabolite biosynthesis. In terms of biological role, reducing polyketide synthase; part of the gene cluster that mediates the biosynthesis of fusamarins, isocoumarin derivatives that show moderate cytotoxicity with IC(50) values between 1 and 50 uM. The polyketide synthase FMN1 probably synthesizes two different polyketides, a tetra- and a pentaketide, containinga varying number of double bonds depending on the selective actions of the trans-enoyl reductase FMN2. Chain fusion will presumably be mediated by the KS domain before finally offloading is catalyzed by the alpha/beta hydrolase fold enzyme FMN3. This is Reducing polyketide synthase 8 from Fusarium mangiferae (Mango malformation disease fungus).